We begin with the raw amino-acid sequence, 509 residues long: ATP synthase subunit alpha (509 aa).

169–176 (GDRQTGKT) provides a ligand contact to ATP.

The protein belongs to the ATPase alpha/beta chains family. In terms of assembly, F-type ATPases have 2 components, CF(1) - the catalytic core - and CF(0) - the membrane proton channel. CF(1) has five subunits: alpha(3), beta(3), gamma(1), delta(1), epsilon(1). CF(0) has three main subunits: a(1), b(2) and c(9-12). The alpha and beta chains form an alternating ring which encloses part of the gamma chain. CF(1) is attached to CF(0) by a central stalk formed by the gamma and epsilon chains, while a peripheral stalk is formed by the delta and b chains.

Its subcellular location is the cell inner membrane. It carries out the reaction ATP + H2O + 4 H(+)(in) = ADP + phosphate + 5 H(+)(out). Functionally, produces ATP from ADP in the presence of a proton gradient across the membrane. The alpha chain is a regulatory subunit. In Rhizobium etli (strain ATCC 51251 / DSM 11541 / JCM 21823 / NBRC 15573 / CFN 42), this protein is ATP synthase subunit alpha.